A 206-amino-acid chain; its full sequence is High frequency lysogenization protein HflD homolog (206 aa).

This sequence belongs to the HflD family.

The protein resides in the cytoplasm. The protein localises to the cell inner membrane. The chain is High frequency lysogenization protein HflD homolog from Pseudomonas aeruginosa (strain LESB58).